The following is a 260-amino-acid chain: Tropinone reductase homolog At2g29330 (260 aa).

Residue 13-37 (LVTGGASGIGHAIVEELAGFGAKIH) coordinates NADP(+). Ser146 is a binding site for substrate. Tyr159 serves as the catalytic Proton acceptor.

This sequence belongs to the short-chain dehydrogenases/reductases (SDR) family. SDR65C subfamily.

Its function is as follows. Reductase active only on small flexible lipophilic carbonyls. No activity with cyclic monoterpenes, tropinone, nitrogen-containing tropinone analogs, tropine or pseudotropine as substrate. This is Tropinone reductase homolog At2g29330 from Arabidopsis thaliana (Mouse-ear cress).